A 448-amino-acid chain; its full sequence is Antizyme inhibitor 1 (448 aa).

It belongs to the Orn/Lys/Arg decarboxylase class-II family. ODC antizyme inhibitor subfamily. As to quaternary structure, monomer. Interacts with OAZ1 and OAZ3; this interaction disrupts the interaction between the antizyme and ODC1. Ubiquitinated, leading to its proteasomal degradation; a process that is reduced in presence of antizyme OAZ1. In terms of tissue distribution, expressed in various tissues including liver, heart and kidney.

It is found in the nucleus. Functionally, antizyme inhibitor (AZI) protein that positively regulates ornithine decarboxylase (ODC) activity and polyamine uptake. AZI is an enzymatically inactive ODC homolog that counteracts the negative effect of ODC antizymes (AZs) OAZ1, OAZ2 and OAZ3 on ODC activity by competing with ODC for antizyme-binding. Inhibits antizyme-dependent ODC degradation and releases ODC monomers from their inactive complex with antizymes, leading to formation of the catalytically active ODC homodimer and restoring polyamine production. This is Antizyme inhibitor 1 (Azin1) from Rattus norvegicus (Rat).